The sequence spans 1448 residues: Probable serine/threonine-protein kinase irlB (1448 aa).

A compositionally biased stretch (acidic residues) spans 412–423; the sequence is DDDDYDDYDDDD. Residues 412 to 446 are disordered; the sequence is DDDDYDDYDDDDDHHSGCNNNNNNNNDGDHNEDEN. Over residues 428–437 the composition is skewed to low complexity; it reads GCNNNNNNNN. 3 coiled-coil regions span residues 666 to 817, 887 to 921, and 974 to 1016; these read AESE…EIQN, EIQL…SNMK, and ENNK…QDED. Residues 975 to 1008 are disordered; that stretch reads NNKKQNLINDNNNNNNNNNNNNNNNNNNNNNNKL. The span at 978 to 1008 shows a compositional bias: low complexity; the sequence is KQNLINDNNNNNNNNNNNNNNNNNNNNNNKL. The 267-residue stretch at 1027–1293 folds into the Protein kinase domain; sequence RNESNILGRG…IQNVLNHPLF (267 aa). ATP is bound by residues 1033-1041 and lysine 1056; that span reads LGRGSNGTL. Aspartate 1151 (proton acceptor) is an active-site residue. In terms of domain architecture, KEN spans 1296-1448; sequence LEKKIQFIDA…TIDYLFNFYN (153 aa).

Belongs to the protein kinase superfamily. Ser/Thr protein kinase family.

It catalyses the reaction L-seryl-[protein] + ATP = O-phospho-L-seryl-[protein] + ADP + H(+). The enzyme catalyses L-threonyl-[protein] + ATP = O-phospho-L-threonyl-[protein] + ADP + H(+). The protein is Probable serine/threonine-protein kinase irlB (irlB-1) of Dictyostelium discoideum (Social amoeba).